Reading from the N-terminus, the 157-residue chain is 2-C-methyl-D-erythritol 2,4-cyclodiphosphate synthase (157 aa).

A divalent metal cation-binding residues include Asp8 and His10. 4-CDP-2-C-methyl-D-erythritol 2-phosphate is bound by residues 8–10 and 34–35; these read DVH and HS. His42 provides a ligand contact to a divalent metal cation. Residues 56 to 58, 132 to 135, and Arg142 contribute to the 4-CDP-2-C-methyl-D-erythritol 2-phosphate site; these read DIG and TTNE.

The protein belongs to the IspF family. As to quaternary structure, homotrimer. It depends on a divalent metal cation as a cofactor.

The enzyme catalyses 4-CDP-2-C-methyl-D-erythritol 2-phosphate = 2-C-methyl-D-erythritol 2,4-cyclic diphosphate + CMP. Its pathway is isoprenoid biosynthesis; isopentenyl diphosphate biosynthesis via DXP pathway; isopentenyl diphosphate from 1-deoxy-D-xylulose 5-phosphate: step 4/6. Functionally, involved in the biosynthesis of isopentenyl diphosphate (IPP) and dimethylallyl diphosphate (DMAPP), two major building blocks of isoprenoid compounds. Catalyzes the conversion of 4-diphosphocytidyl-2-C-methyl-D-erythritol 2-phosphate (CDP-ME2P) to 2-C-methyl-D-erythritol 2,4-cyclodiphosphate (ME-CPP) with a corresponding release of cytidine 5-monophosphate (CMP). The polypeptide is 2-C-methyl-D-erythritol 2,4-cyclodiphosphate synthase (Pelodictyon phaeoclathratiforme (strain DSM 5477 / BU-1)).